Consider the following 926-residue polypeptide: Thyroid peroxidase (926 aa).

A signal peptide spans 1-14 (MGARAVLGVTLAVA). The Extracellular portion of the chain corresponds to 19–844 (FFASILRRKD…TCVDAGRLPR (826 aa)). Residue asparagine 129 is glycosylated (N-linked (GlcNAc...) asparagine). A disulfide bridge links cysteine 142 with cysteine 158. Heme b is bound at residue aspartate 238. The active-site Proton acceptor is the histidine 239. Position 240 (aspartate 240) interacts with Ca(2+). Disulfide bonds link cysteine 259/cysteine 269 and cysteine 263/cysteine 286. N-linked (GlcNAc...) asparagine glycans are attached at residues asparagine 277 and asparagine 307. Residues threonine 321, phenylalanine 323, aspartate 325, and serine 327 each coordinate Ca(2+). N-linked (GlcNAc...) asparagine glycosylation is present at asparagine 342. Glutamate 398 and histidine 493 together coordinate heme b. Intrachain disulfides connect cysteine 596/cysteine 653, cysteine 694/cysteine 719, cysteine 740/cysteine 780, cysteine 766/cysteine 792, cysteine 798/cysteine 812, cysteine 806/cysteine 821, and cysteine 823/cysteine 836. The Sushi domain maps to 738-793 (DACGFPDPVEDGGFLLCEERGQRVLVFSCRHGFRLRGPAQITCTPRGWDSPPPLCK). In terms of domain architecture, EGF-like; calcium-binding spans 794–837 (DINECEDETDPPCHASARCKNTKGGVLCECSDPLVLGEDGRTCV). Residues 845-869 (ASVVSIALGAVLVCGLAGLAWTVVC) traverse the membrane as a helical segment. Residues 870 to 926 (RWTHADARPLLPVGEGEGDGKSPSLPLPGCGNRRDVGAAPALEVEQDLSCGSRGLCE) lie on the Cytoplasmic side of the membrane.

The protein belongs to the peroxidase family. XPO subfamily. Interacts with DUOX1, DUOX2 and CYBA. Ca(2+) is required as a cofactor. The cofactor is heme b. Heme is covalently bound through a H(2)O(2)-dependent autocatalytic process. Heme insertion is important for the delivery of protein at the cell surface. In terms of processing, cleaved in its N-terminal part. Post-translationally, N-glycosylated; contains mannose and N-acetylglucosamine.

It is found in the membrane. It catalyses the reaction 2 iodide + H2O2 + 2 H(+) = diiodine + 2 H2O. The catalysed reaction is [thyroglobulin]-L-tyrosine + iodide + H2O2 + H(+) = [thyroglobulin]-3-iodo-L-tyrosine + 2 H2O. The enzyme catalyses [thyroglobulin]-3-iodo-L-tyrosine + iodide + H2O2 + H(+) = [thyroglobulin]-3,5-diiodo-L-tyrosine + 2 H2O. It carries out the reaction 2 [thyroglobulin]-3,5-diiodo-L-tyrosine + H2O2 = [thyroglobulin]-L-thyroxine + [thyroglobulin]-dehydroalanine + 2 H2O. It catalyses the reaction [thyroglobulin]-3-iodo-L-tyrosine + [thyroglobulin]-3,5-diiodo-L-tyrosine + H2O2 = [thyroglobulin]-3,3',5-triiodo-L-thyronine + [thyroglobulin]-dehydroalanine + 2 H2O. Its pathway is hormone biosynthesis; thyroid hormone biosynthesis. Its function is as follows. Iodination and coupling of the hormonogenic tyrosines in thyroglobulin to yield the thyroid hormones T(3) and T(4). In Sus scrofa (Pig), this protein is Thyroid peroxidase (TPO).